Consider the following 513-residue polypeptide: ATP synthase subunit alpha (513 aa).

ATP is bound at residue 169 to 176; the sequence is GDRQTGKT.

Belongs to the ATPase alpha/beta chains family. In terms of assembly, F-type ATPases have 2 components, CF(1) - the catalytic core - and CF(0) - the membrane proton channel. CF(1) has five subunits: alpha(3), beta(3), gamma(1), delta(1), epsilon(1). CF(0) has three main subunits: a(1), b(2) and c(9-12). The alpha and beta chains form an alternating ring which encloses part of the gamma chain. CF(1) is attached to CF(0) by a central stalk formed by the gamma and epsilon chains, while a peripheral stalk is formed by the delta and b chains.

The protein localises to the cell inner membrane. The enzyme catalyses ATP + H2O + 4 H(+)(in) = ADP + phosphate + 5 H(+)(out). In terms of biological role, produces ATP from ADP in the presence of a proton gradient across the membrane. The alpha chain is a regulatory subunit. The chain is ATP synthase subunit alpha from Haemophilus influenzae (strain 86-028NP).